We begin with the raw amino-acid sequence, 465 residues long: Serine/threonine-protein kinase 38 (465 aa).

Ala2 is subject to N-acetylalanine. The interval 62 to 87 (KRLRRSAHARKETEFLRLKRTRLGLE) is interaction with S100B. Thr74 carries the phosphothreonine modification. The Protein kinase domain maps to 89–382 (FESLKVIGRG…VEEIKSNSFF (294 aa)). ATP-binding positions include 95 to 103 (IGRGAFGEV) and Lys118. The active-site Proton acceptor is Asp212. Ser264 carries the post-translational modification Phosphoserine. A Phosphoserine; by autocatalysis modification is found at Ser281. Residues 306–311 (WSLGVI) carry the UFM1-interacting motif (UFIM) motif. Positions 383–455 (EGVDWEHIRE…KRFEGLTARG (73 aa)) constitute an AGC-kinase C-terminal domain. Thr444 carries the phosphothreonine; by STK24/MST3 modification.

The protein belongs to the protein kinase superfamily. AGC Ser/Thr protein kinase family. In terms of assembly, homodimeric S100B binds two molecules of STK38. Interacts with MOB1 and MOB2. Interacts with MAP3K1 and MAP3K2 (via the kinase catalytic domain). Forms a tripartite complex with MOBKL1B and STK3/MST2. Interacts with MICAL1; leading to inhibit the protein kinase activity by antagonizing activation by MST1/STK4. It depends on Mg(2+) as a cofactor. Post-translationally, ISGylated. In terms of processing, phosphorylated by STK3/MST2 and this is enhanced by MOBKL1B. As to expression, ubiquitously expressed with highest levels observed in peripheral blood leukocytes.

The protein localises to the nucleus. It localises to the cytoplasm. The protein resides in the chromosome. The catalysed reaction is L-seryl-[protein] + ATP = O-phospho-L-seryl-[protein] + ADP + H(+). It catalyses the reaction L-threonyl-[protein] + ATP = O-phospho-L-threonyl-[protein] + ADP + H(+). Its activity is regulated as follows. Activated by binding of S100B which releases autoinhibitory N-lobe interactions, enabling ATP to bind and the autophosphorylation of Ser-281. Thr-444 then undergoes calcium-dependent phosphorylation by STK24/MST3. Interactions between phosphorylated Thr-444 and the N-lobe promote additional structural changes that complete the activation of the kinase. Autoinhibition is also released by the binding of MOB1/MOBKL1A and MOB2/HCCA2 to the N-terminal of STK38. Functionally, serine/threonine-protein kinase that acts as a negative regulator of MAP3K1/2 signaling. Converts MAP3K2 from its phosphorylated form to its non-phosphorylated form and inhibits autophosphorylation of MAP3K2. Acts as an ufmylation 'reader' in a kinase-independent manner: specifically recognizes and binds mono-ufmylated histone H4 in response to DNA damage, promoting the recruitment of SUV39H1 to the double-strand breaks, resulting in ATM activation. This chain is Serine/threonine-protein kinase 38, found in Homo sapiens (Human).